The chain runs to 398 residues: Yellow-related salivary protein SP04 (398 aa).

Positions 1–18 are cleaved as a signal peptide; the sequence is MKWFLFLLSTIFVQGILG. Residues 73–94 form a disordered region; sequence TLTEIERKKHPERSPPLSKFSG. Residues 75-85 are compositionally biased toward basic and acidic residues; it reads TEIERKKHPER.

The protein belongs to the major royal jelly protein family. As to expression, female salivary gland (at protein level).

Its subcellular location is the secreted. Its function is as follows. Probably modulates blood feeding of sand flies on vertebrate species by binding and sequestering different mediators involved in the host response. Binds biogenic amines. Binds serotonin with high affinity. Binds histamine with low affinity. This is Yellow-related salivary protein SP04 from Phlebotomus argentipes (Phlebotomine sand fly).